A 236-amino-acid chain; its full sequence is H2HPP isomerase (236 aa).

2 consecutive Cupin type-2 domains span residues 40–106 (YVPP…AIDI) and 151–215 (NIPG…SKSV). 8 residues coordinate a divalent metal cation: His-50, His-52, Gln-56, His-91, His-162, His-164, Gln-168, and His-202. Residue Tyr-223 coordinates substrate.

In terms of assembly, monomer. Requires Fe(2+) as cofactor. Co(2+) serves as cofactor.

The protein resides in the cytoplasm. It catalyses the reaction 3-[(4R)-4-hydroxycyclohexa-1,5-dien-1-yl]-2-oxopropanoate = 3-[(1E,4R)-4-hydroxycyclohex-2-en-1-ylidene]pyruvate. It functions in the pathway antibiotic biosynthesis; bacilysin biosynthesis. In terms of biological role, part of the bacABCDEF operon responsible for the biosynthesis of the nonribosomally synthesized dipeptide antibiotic bacilysin, composed of L-alanine and L-anticapsin. Bacilysin is an irreversible inactivator of the glutaminase domain of glucosamine synthetase. BacB catalyzes the allylic isomerization of the endocyclic-delta(4),delta(8)-7R-dihydro-hydroxyphenylpyruvate (en-H2HPP) to generate a mixture of 3E,7R- and 3Z, 7R-olefins of the exocyclic-delta(3),delta(5)-dihydro-hydroxyphenylpyruvate (ex-H2HPP). In Bacillus amyloliquefaciens (Bacillus velezensis), this protein is H2HPP isomerase.